We begin with the raw amino-acid sequence, 799 residues long: E3 UFM1-protein ligase 1 homolog (799 aa).

The interval 429 to 483 (TTTTTTTQPSKKKDNLINSDDDDNQDNNKKSSKGKNKKSKQQQSSIQKLINDSED) is disordered. The segment covering 458–468 (KSSKGKNKKSK) has biased composition (basic residues). The span at 469-478 (QQQSSIQKLI) shows a compositional bias: low complexity.

This sequence belongs to the UFL1 family.

Its function is as follows. E3 UFM1-protein ligase that mediates ufmylation of target proteins. This Dictyostelium discoideum (Social amoeba) protein is E3 UFM1-protein ligase 1 homolog.